We begin with the raw amino-acid sequence, 187 residues long: Calcium and integrin-binding family member 2 (187 aa).

EF-hand domains are found at residues 66–101, 103–138, and 144–179; these read RENP…LCES, PREL…LTKS, and EVVL…APDF. Asp116, Asn118, Asp120, Asp127, Asp157, Asp159, Asp161, Lys163, and Asp168 together coordinate Ca(2+).

Monomer. Homodimer. Interacts with WHRN and MYO7A. Interacts with ITGA2B (via C-terminus cytoplasmic tail region); the interactions are stabilized/increased in a calcium and magnesium-dependent manner. Interacts with ITGA7 (via C-terminus cytoplasmic tail region); the interactions are stabilized/increased in a calcium and magnesium-dependent manner. Interacts with TMC1. Interacts with TMC2.

It is found in the cytoplasm. The protein resides in the cell projection. Its subcellular location is the stereocilium. It localises to the photoreceptor inner segment. The protein localises to the cilium. It is found in the photoreceptor outer segment. The protein resides in the cell membrane. Its subcellular location is the sarcolemma. In terms of biological role, calcium- and integrin-binding protein that plays a role in intracellular calcium homeostasis. Acts as an auxiliary subunit of the sensory mechanoelectrical transduction (MET) channel in hair cells. Essential for mechanoelectrical transduction (MET) currents in auditory hair cells and thereby required for hearing. Regulates the function of hair cell mechanotransduction by controlling the distribution of transmembrane channel-like proteins TMC1 and TMC2, and by regulating the function of the MET channels in hair cells. Required for the maintenance of auditory hair cell stereocilia bundle morphology and function and for hair-cell survival in the cochlea. Critical for proper photoreceptor cell maintenance and function. Plays a role in intracellular calcium homeostasis by decreasing ATP-induced calcium release. This is Calcium and integrin-binding family member 2 (Cib2) from Rattus norvegicus (Rat).